Consider the following 166-residue polypeptide: Cyclic pyranopterin monophosphate synthase (166 aa).

Substrate is bound by residues 83 to 85 (LCH) and 121 to 122 (ME). Residue aspartate 136 is part of the active site.

The protein belongs to the MoaC family. In terms of assembly, homohexamer; trimer of dimers.

It carries out the reaction (8S)-3',8-cyclo-7,8-dihydroguanosine 5'-triphosphate = cyclic pyranopterin phosphate + diphosphate. The protein operates within cofactor biosynthesis; molybdopterin biosynthesis. Functionally, catalyzes the conversion of (8S)-3',8-cyclo-7,8-dihydroguanosine 5'-triphosphate to cyclic pyranopterin monophosphate (cPMP). This is Cyclic pyranopterin monophosphate synthase from Trichodesmium erythraeum (strain IMS101).